We begin with the raw amino-acid sequence, 255 residues long: Taurine import ATP-binding protein TauB (255 aa).

The region spanning 2–229 (LQISHLYADY…RFVAGESSRS (228 aa)) is the ABC transporter domain. ATP is bound at residue 34–41 (GPSGCGKT).

The protein belongs to the ABC transporter superfamily. Taurine importer (TC 3.A.1.17.1) family. As to quaternary structure, the complex is composed of two ATP-binding proteins (TauB), two transmembrane proteins (TauC) and a solute-binding protein (TauA).

The protein localises to the cell inner membrane. The catalysed reaction is taurine(out) + ATP + H2O = taurine(in) + ADP + phosphate + H(+). Its function is as follows. Part of the ABC transporter complex TauABC involved in taurine import. Responsible for energy coupling to the transport system. The chain is Taurine import ATP-binding protein TauB from Escherichia coli (strain K12).